The sequence spans 66 residues: DNA-directed RNA polymerase subunit Rpo10 (66 aa).

Zn(2+) is bound by residues cysteine 7, cysteine 10, cysteine 44, and cysteine 45.

Belongs to the archaeal Rpo10/eukaryotic RPB10 RNA polymerase subunit family. In terms of assembly, part of the RNA polymerase complex. Zn(2+) is required as a cofactor.

The protein localises to the cytoplasm. It catalyses the reaction RNA(n) + a ribonucleoside 5'-triphosphate = RNA(n+1) + diphosphate. DNA-dependent RNA polymerase (RNAP) catalyzes the transcription of DNA into RNA using the four ribonucleoside triphosphates as substrates. The sequence is that of DNA-directed RNA polymerase subunit Rpo10 from Sulfurisphaera tokodaii (strain DSM 16993 / JCM 10545 / NBRC 100140 / 7) (Sulfolobus tokodaii).